Reading from the N-terminus, the 404-residue chain is Cysteine desulfurase IscS (404 aa).

Pyridoxal 5'-phosphate is bound by residues 75-76 (AT), Asn155, Gln183, and 203-205 (SAH). At Lys206 the chain carries N6-(pyridoxal phosphate)lysine. Thr243 serves as a coordination point for pyridoxal 5'-phosphate. Residue Cys328 is the Cysteine persulfide intermediate of the active site. A [2Fe-2S] cluster-binding site is contributed by Cys328.

This sequence belongs to the class-V pyridoxal-phosphate-dependent aminotransferase family. NifS/IscS subfamily. As to quaternary structure, homodimer. Forms a heterotetramer with IscU, interacts with other sulfur acceptors. The cofactor is pyridoxal 5'-phosphate.

Its subcellular location is the cytoplasm. The enzyme catalyses (sulfur carrier)-H + L-cysteine = (sulfur carrier)-SH + L-alanine. Its pathway is cofactor biosynthesis; iron-sulfur cluster biosynthesis. Master enzyme that delivers sulfur to a number of partners involved in Fe-S cluster assembly, tRNA modification or cofactor biosynthesis. Catalyzes the removal of elemental sulfur atoms from cysteine to produce alanine. Functions as a sulfur delivery protein for Fe-S cluster synthesis onto IscU, an Fe-S scaffold assembly protein, as well as other S acceptor proteins. The chain is Cysteine desulfurase IscS from Vibrio cholerae serotype O1 (strain M66-2).